A 122-amino-acid polypeptide reads, in one-letter code: Large ribosomal subunit protein uL14 (122 aa).

Belongs to the universal ribosomal protein uL14 family. Part of the 50S ribosomal subunit. Forms a cluster with proteins L3 and L19. In the 70S ribosome, L14 and L19 interact and together make contacts with the 16S rRNA in bridges B5 and B8.

Binds to 23S rRNA. Forms part of two intersubunit bridges in the 70S ribosome. This is Large ribosomal subunit protein uL14 from Staphylococcus carnosus (strain TM300).